We begin with the raw amino-acid sequence, 293 residues long: Movement protein BC1 (293 aa).

The interval serine 207 to alanine 228 is disordered. Residues alanine 209–glycine 222 show a composition bias toward polar residues.

The protein belongs to the begomovirus movement protein BC1 family. In terms of assembly, binds to dimeric supercoiled plasmid DNA. In terms of processing, phosphorylated.

It is found in the host cell membrane. It localises to the host microsome membrane. The protein localises to the host endoplasmic reticulum membrane. In terms of biological role, movement protein involved in the cell-to-cell and systemic transport of viral genomic DNA. Begomoviruses use 2 proteins to transport their DNA from cell to cell. The nuclear shuttle protein (NSP) shuttles it between nucleus and cytoplasm and the movement protein (MP) probably transports the DNA-NSP complex to the cell periphery and facilitates further movement across the cell wall. The sequence is that of Movement protein BC1 from Tomato golden mosaic virus (strain Yellow vein) (TGMV).